The sequence spans 318 residues: Ubiquitin-conjugating enzyme E2 J1 (318 aa).

Residues 1–282 (METRYNLKSP…QGQPPRAHHT (282 aa)) lie on the Cytoplasmic side of the membrane. A UBC core domain is found at 10-168 (PAVKRLMKEA…VLLPLKSGSG (159 aa)). Catalysis depends on Cys-91, which acts as the Glycyl thioester intermediate. At Ser-184 the chain carries Phosphoserine. Over residues 215–233 (PTTFQGATASTSYGAQNPS) the composition is skewed to polar residues. The segment at 215–283 (PTTFQGATAS…GQPPRAHHTE (69 aa)) is disordered. Residues 249–269 (SMSPRQRRAQQQSQRRPSTSP) are compositionally biased toward low complexity. Ser-266 and Ser-268 each carry phosphoserine. A helical; Anchor for type IV membrane protein membrane pass occupies residues 283–303 (EHGGSAMLIIILTLALAALIF). Residues 304 to 318 (RRIYLANEYIFDFEL) are Lumenal-facing.

It belongs to the ubiquitin-conjugating enzyme family. As to quaternary structure, component of the HRD1 complex, which comprises at least SYNV1/HRD1, DERL1/2, FAM8A1, HERPUD1/HERP, OS9, SEL1L and UBE2J1. Interacts with E3 ligase RNF26. Interacts with E3 ligase RNF133. Phosphorylated at Ser-184 in a cytosolic stress-dependent manner by MAP kinase p38 MAPKAPK2. Post-translationally, phosphorylated UBE2J1 is rapidly ubiquitinated and subsequently degraded by the proteasome.

The protein resides in the endoplasmic reticulum membrane. It catalyses the reaction S-ubiquitinyl-[E1 ubiquitin-activating enzyme]-L-cysteine + [E2 ubiquitin-conjugating enzyme]-L-cysteine = [E1 ubiquitin-activating enzyme]-L-cysteine + S-ubiquitinyl-[E2 ubiquitin-conjugating enzyme]-L-cysteine.. The protein operates within protein modification; protein ubiquitination. Catalyzes the covalent attachment of ubiquitin to other proteins. Functions in the selective degradation of misfolded membrane proteins from the endoplasmic reticulum (ERAD) and is essential for cells to recover from ER stress. Plays a role in MAPKAPK2-dependent translational control of TNF-alpha synthesis. Also acts as a platform for perinuclear positioning of the endosomal system by mediating ubiquitination of SQSTM1 through interaction with the E3 ubiquitin-protein ligase RNF26. Plays a role in male fecundity through the interaction with the E3 ubiquitin-protein ligase RNF133. In Mus musculus (Mouse), this protein is Ubiquitin-conjugating enzyme E2 J1 (Ube2j1).